The primary structure comprises 144 residues: Maximins 1/H12 (144 aa).

Residues 1–18 form the signal peptide; that stretch reads MNFKYIVAVSFLIASAYA. The propeptide occupies 19–43; that stretch reads RSEENDEQSLSQRDVLEEESLREIR. Asparagine 70 carries the asparagine amide modification. A propeptide spanning residues 74–123 is cleaved from the precursor; it reads TAEEHEVMKRLEVVMRDLDSLDYPEEASERETRDFNQEEIANLYTKKEKR. Isoleucine 143 carries the isoleucine amide modification.

The protein belongs to the bombinin family. As to expression, expressed by the skin glands.

The protein resides in the secreted. Functionally, maximin-1 shows antibacterial activity against both Gram-positive and Gram-negative bacteria. It also shows antimicrobial activity against the fungus C.albicans, but not against A.flavus nor P.uticale. It has little hemolytic activity. It possess a significant cytotoxicity against tumor cell lines. It does not possess a significant anti-HIV activity. It shows high spermicidal activity. Its function is as follows. Maximin-H12 shows antimicrobial activity against bacteria and against the fungus C.albicans. Shows strong hemolytic activity. The sequence is that of Maximins 1/H12 from Bombina maxima (Giant fire-bellied toad).